The sequence spans 104 residues: Large ribosomal subunit protein bL21 (104 aa).

It belongs to the bacterial ribosomal protein bL21 family. In terms of assembly, part of the 50S ribosomal subunit. Contacts protein L20.

Functionally, this protein binds to 23S rRNA in the presence of protein L20. This chain is Large ribosomal subunit protein bL21, found in Kosmotoga olearia (strain ATCC BAA-1733 / DSM 21960 / TBF 19.5.1).